The primary structure comprises 198 residues: Large ribosomal subunit protein bL25 (198 aa).

It belongs to the bacterial ribosomal protein bL25 family. CTC subfamily. As to quaternary structure, part of the 50S ribosomal subunit; part of the 5S rRNA/L5/L18/L25 subcomplex. Contacts the 5S rRNA. Binds to the 5S rRNA independently of L5 and L18.

This is one of the proteins that binds to the 5S RNA in the ribosome where it forms part of the central protuberance. This chain is Large ribosomal subunit protein bL25, found in Gloeothece citriformis (strain PCC 7424) (Cyanothece sp. (strain PCC 7424)).